We begin with the raw amino-acid sequence, 496 residues long: NADP-dependent glyceraldehyde-3-phosphate dehydrogenase (496 aa).

Ala-2 carries the N-acetylalanine modification. Thr-4 is modified (phosphothreonine). Residues Arg-116 and 169–170 contribute to the substrate site; that span reads NY. The NADP(+) site is built by Lys-192, Thr-195, and Asp-230. 245-249 contributes to the NAD(+) binding site; it reads GGDTG. Glu-264 (proton acceptor) is an active-site residue. 297 to 299 lines the substrate pocket; that stretch reads RCT. The Nucleophile role is filled by Cys-298. Glu-391 contributes to the NADP(+) binding site. Residue Arg-451 coordinates substrate.

This sequence belongs to the aldehyde dehydrogenase family.

It is found in the cytoplasm. The enzyme catalyses D-glyceraldehyde 3-phosphate + NADP(+) + H2O = (2R)-3-phosphoglycerate + NADPH + 2 H(+). Functionally, important as a means of generating NADPH for biosynthetic reactions. The chain is NADP-dependent glyceraldehyde-3-phosphate dehydrogenase (ALDH11A3) from Arabidopsis thaliana (Mouse-ear cress).